Here is a 273-residue protein sequence, read N- to C-terminus: Large ribosomal subunit protein uL2cy (273 aa).

Disordered regions lie at residues 1–22 and 224–273; these read MAIH…DSQV and NPVD…RRRK.

Belongs to the universal ribosomal protein uL2 family. Part of the 50S ribosomal subunit.

It localises to the plastid. The protein localises to the chloroplast. The protein is Large ribosomal subunit protein uL2cy (rpl2-B) of Chloranthus spicatus (Chulantree).